Consider the following 93-residue polypeptide: Large ribosomal subunit protein uL23cz/uL23cy (93 aa).

It belongs to the universal ribosomal protein uL23 family. In terms of assembly, part of the 50S ribosomal subunit.

Its subcellular location is the plastid. It localises to the chloroplast. Binds to 23S rRNA. The sequence is that of Large ribosomal subunit protein uL23cz/uL23cy (rpl23-A) from Jasminum nudiflorum (Winter jasmine).